We begin with the raw amino-acid sequence, 328 residues long: MKTIFSGIQPSGVITIGNYIGALRQFVELQHEYNCYFCIVDQHAITVWQDPHELRQNIRRLAAKYLAVGIDPTQATLFIQSEVPAHAQAAWMLQCIVYIGELERMTQFKEKSAGKEAVSAGLLTYPPLMAADILLYNTDIVPVGEDQKQHIELTRDLAERFNKRYGELFTIPEARIPKVGARIMSLVDPTKKMSKSDPNPKAYITLLDDAKTIEKKIKSAVTDSEGTIRYDKEAKPGISNLLNIYSTLSGQSIEELERQYEGKGYGVFKADLAQVVIETLRPIQERYHHWMESEELDRVLDEGAEKANRVASEMVRKMEQAMGLGRRR.

ATP contacts are provided by residues 9–11 (QPS) and 17–18 (GN). The 'HIGH' region signature appears at 10–18 (PSGVITIGN). L-tryptophan is bound at residue aspartate 132. ATP contacts are provided by residues 144 to 146 (GED), isoleucine 183, and 192 to 196 (KMSKS). The 'KMSKS' region motif lies at 192 to 196 (KMSKS).

It belongs to the class-I aminoacyl-tRNA synthetase family. As to quaternary structure, homodimer.

It is found in the cytoplasm. The enzyme catalyses tRNA(Trp) + L-tryptophan + ATP = L-tryptophyl-tRNA(Trp) + AMP + diphosphate + H(+). Inhibited by indolmycin, a competitive inhibitor for tryptophan. Its function is as follows. Catalyzes the attachment of tryptophan to tRNA(Trp). The chain is Tryptophan--tRNA ligase from Geobacillus stearothermophilus (Bacillus stearothermophilus).